Here is a 488-residue protein sequence, read N- to C-terminus: UDP-N-acetylmuramoyl-L-alanyl-D-glutamate--2,6-diaminopimelate ligase (488 aa).

Residue serine 29 coordinates UDP-N-acetyl-alpha-D-muramoyl-L-alanyl-D-glutamate. Glycine 108–serine 114 lines the ATP pocket. UDP-N-acetyl-alpha-D-muramoyl-L-alanyl-D-glutamate-binding positions include threonine 150–threonine 151, serine 177, glutamine 183, and arginine 185. N6-carboxylysine is present on lysine 217. Residues arginine 381, aspartate 405 to arginine 408, glycine 453, and glutamate 457 each bind meso-2,6-diaminopimelate. Positions aspartate 405–arginine 408 match the Meso-diaminopimelate recognition motif motif.

This sequence belongs to the MurCDEF family. MurE subfamily. Requires Mg(2+) as cofactor. Carboxylation is probably crucial for Mg(2+) binding and, consequently, for the gamma-phosphate positioning of ATP.

It is found in the cytoplasm. The enzyme catalyses UDP-N-acetyl-alpha-D-muramoyl-L-alanyl-D-glutamate + meso-2,6-diaminopimelate + ATP = UDP-N-acetyl-alpha-D-muramoyl-L-alanyl-gamma-D-glutamyl-meso-2,6-diaminopimelate + ADP + phosphate + H(+). It participates in cell wall biogenesis; peptidoglycan biosynthesis. Catalyzes the addition of meso-diaminopimelic acid to the nucleotide precursor UDP-N-acetylmuramoyl-L-alanyl-D-glutamate (UMAG) in the biosynthesis of bacterial cell-wall peptidoglycan. In Brucella melitensis biotype 1 (strain ATCC 23456 / CCUG 17765 / NCTC 10094 / 16M), this protein is UDP-N-acetylmuramoyl-L-alanyl-D-glutamate--2,6-diaminopimelate ligase.